The primary structure comprises 552 residues: Carotenoid cleavage dioxygenase 8 homolog A, chloroplastic (552 aa).

Residues 1 to 43 (MATSLTLIATPCTAPRSSSSFALAPRLPPRCSNATAARRRAVR) constitute a chloroplast transit peptide. The disordered stretch occupies residues 32 to 73 (SNATAARRRAVRATTLQSDQEPAGSGDSGATTTKLSASTSVR). Residues 59 to 72 (SGATTTKLSASTSV) are compositionally biased toward polar residues. Residues histidine 239, histidine 289, histidine 356, and histidine 543 each contribute to the Fe cation site.

It belongs to the carotenoid oxygenase family. It depends on Fe(2+) as a cofactor. In terms of tissue distribution, highly expressed in panicles, inflorescences and parenchyma cells of the root stele, and at lower levels in shoot apex, leaf buds and xylem parenchyma cells of the stem.

The protein resides in the plastid. Its subcellular location is the chloroplast. Its function is as follows. May be involved in strigolactones biosynthesis. In Oryza sativa subsp. japonica (Rice), this protein is Carotenoid cleavage dioxygenase 8 homolog A, chloroplastic (CCD8A).